A 145-amino-acid polypeptide reads, in one-letter code: Antiholin-like protein LrgA (145 aa).

4 consecutive transmembrane segments (helical) span residues 10-30, 33-53, 72-92, and 96-116; these read PAHF…SKII, FMPI…VLLC, NIGL…GVIS, and FLII…TGYV.

This sequence belongs to the CidA/LrgA family. LrgA subfamily.

It is found in the cell membrane. Its function is as follows. Inhibits the expression or activity of extracellular murein hydrolases by interacting, possibly with LrgB, with the holin-like proteins CidA and/or CidB. The LrgAB and CidAB proteins may affect the proton motive force of the membrane. May be involved in programmed cell death (PCD), possibly triggering PCD in response to antibiotics and environmental stresses. This Staphylococcus aureus (strain JH1) protein is Antiholin-like protein LrgA.